We begin with the raw amino-acid sequence, 452 residues long: Bifunctional protein GlmU (452 aa).

A pyrophosphorylase region spans residues 1–226; it reads MKNIHAIILA…KFEIAGVNDK (226 aa). UDP-N-acetyl-alpha-D-glucosamine contacts are provided by residues 9 to 12, Lys23, Gln73, 78 to 79, 100 to 102, Gly137, Glu151, Asn166, and Asn224; these read LAAG, GT, and YGD. Residue Asp102 coordinates Mg(2+). Asn224 contributes to the Mg(2+) binding site. A linker region spans residues 227-247; the sequence is VQLAELERIFQINQATQFMQQ. Residues 248–452 are N-acetyltransferase; the sequence is GLSLKDPNRF…LKNWQRPTKK (205 aa). Positions 330 and 348 each coordinate UDP-N-acetyl-alpha-D-glucosamine. The active-site Proton acceptor is His360. UDP-N-acetyl-alpha-D-glucosamine-binding residues include Tyr363 and Asn374. Acetyl-CoA is bound by residues Ala377, 383–384, Ser402, Ala420, and Arg437; that span reads NY.

It in the N-terminal section; belongs to the N-acetylglucosamine-1-phosphate uridyltransferase family. This sequence in the C-terminal section; belongs to the transferase hexapeptide repeat family. In terms of assembly, homotrimer. Mg(2+) is required as a cofactor.

It is found in the cytoplasm. The catalysed reaction is alpha-D-glucosamine 1-phosphate + acetyl-CoA = N-acetyl-alpha-D-glucosamine 1-phosphate + CoA + H(+). It catalyses the reaction N-acetyl-alpha-D-glucosamine 1-phosphate + UTP + H(+) = UDP-N-acetyl-alpha-D-glucosamine + diphosphate. Its pathway is nucleotide-sugar biosynthesis; UDP-N-acetyl-alpha-D-glucosamine biosynthesis; N-acetyl-alpha-D-glucosamine 1-phosphate from alpha-D-glucosamine 6-phosphate (route II): step 2/2. It participates in nucleotide-sugar biosynthesis; UDP-N-acetyl-alpha-D-glucosamine biosynthesis; UDP-N-acetyl-alpha-D-glucosamine from N-acetyl-alpha-D-glucosamine 1-phosphate: step 1/1. The protein operates within bacterial outer membrane biogenesis; LPS lipid A biosynthesis. In terms of biological role, catalyzes the last two sequential reactions in the de novo biosynthetic pathway for UDP-N-acetylglucosamine (UDP-GlcNAc). The C-terminal domain catalyzes the transfer of acetyl group from acetyl coenzyme A to glucosamine-1-phosphate (GlcN-1-P) to produce N-acetylglucosamine-1-phosphate (GlcNAc-1-P), which is converted into UDP-GlcNAc by the transfer of uridine 5-monophosphate (from uridine 5-triphosphate), a reaction catalyzed by the N-terminal domain. The polypeptide is Bifunctional protein GlmU (Ruthia magnifica subsp. Calyptogena magnifica).